The sequence spans 528 residues: Probable GTP-binding protein OBGM, mitochondrial (528 aa).

Residues 1-45 constitute a mitochondrion transit peptide; sequence MWRRQHALLRRISLPKPPAATGIGCYYATEPEGRKPKTAPLQSRG. The 294-residue stretch at 46–339 folds into the Obg domain; it reads MVDRFRLRAK…TYLILELKSI (294 aa). Disordered regions lie at residues 52–87 and 167–212; these read LRAK…RGGD and HSPF…NHRG. A compositionally biased stretch (gly residues) spans 77–86; the sequence is PDGGNGGRGG. Residues 197-207 show a composition bias toward basic and acidic residues; sequence NTAENDCERGN. The 174-residue stretch at 340–513 folds into the OBG-type G domain; sequence ADVGLVGMPN…LRVGLRDLMD (174 aa). GTP-binding positions include 346–353 and 393–397; these read GMPNAGKS and DIPGL.

The protein belongs to the TRAFAC class OBG-HflX-like GTPase superfamily. OBG GTPase family.

The protein localises to the mitochondrion. May bind GTP and have GTPase activity. This Oryza sativa subsp. japonica (Rice) protein is Probable GTP-binding protein OBGM, mitochondrial (OBGM).